The primary structure comprises 312 residues: Ribosomal RNA small subunit methyltransferase H (312 aa).

Residues 33–35, D53, F80, D101, and Q108 contribute to the S-adenosyl-L-methionine site; that span reads GGH.

It belongs to the methyltransferase superfamily. RsmH family.

Its subcellular location is the cytoplasm. It carries out the reaction cytidine(1402) in 16S rRNA + S-adenosyl-L-methionine = N(4)-methylcytidine(1402) in 16S rRNA + S-adenosyl-L-homocysteine + H(+). Its function is as follows. Specifically methylates the N4 position of cytidine in position 1402 (C1402) of 16S rRNA. The protein is Ribosomal RNA small subunit methyltransferase H of Desulfosudis oleivorans (strain DSM 6200 / JCM 39069 / Hxd3) (Desulfococcus oleovorans).